A 331-amino-acid polypeptide reads, in one-letter code: Holliday junction branch migration complex subunit RuvB (331 aa).

Residues Met-1 to Tyr-182 are large ATPase domain (RuvB-L). ATP contacts are provided by residues Leu-21, Arg-22, Gly-63, Lys-66, Thr-67, Thr-68, Glu-129–Tyr-131, Arg-172, Tyr-182, and Arg-219. Thr-67 lines the Mg(2+) pocket. The interval Ser-183–Gly-254 is small ATPAse domain (RuvB-S). A head domain (RuvB-H) region spans residues Gly-257–Ile-331. DNA is bound by residues Arg-310 and Arg-315.

It belongs to the RuvB family. As to quaternary structure, homohexamer. Forms an RuvA(8)-RuvB(12)-Holliday junction (HJ) complex. HJ DNA is sandwiched between 2 RuvA tetramers; dsDNA enters through RuvA and exits via RuvB. An RuvB hexamer assembles on each DNA strand where it exits the tetramer. Each RuvB hexamer is contacted by two RuvA subunits (via domain III) on 2 adjacent RuvB subunits; this complex drives branch migration. In the full resolvosome a probable DNA-RuvA(4)-RuvB(12)-RuvC(2) complex forms which resolves the HJ.

The protein resides in the cytoplasm. The enzyme catalyses ATP + H2O = ADP + phosphate + H(+). Functionally, the RuvA-RuvB-RuvC complex processes Holliday junction (HJ) DNA during genetic recombination and DNA repair, while the RuvA-RuvB complex plays an important role in the rescue of blocked DNA replication forks via replication fork reversal (RFR). RuvA specifically binds to HJ cruciform DNA, conferring on it an open structure. The RuvB hexamer acts as an ATP-dependent pump, pulling dsDNA into and through the RuvAB complex. RuvB forms 2 homohexamers on either side of HJ DNA bound by 1 or 2 RuvA tetramers; 4 subunits per hexamer contact DNA at a time. Coordinated motions by a converter formed by DNA-disengaged RuvB subunits stimulates ATP hydrolysis and nucleotide exchange. Immobilization of the converter enables RuvB to convert the ATP-contained energy into a lever motion, pulling 2 nucleotides of DNA out of the RuvA tetramer per ATP hydrolyzed, thus driving DNA branch migration. The RuvB motors rotate together with the DNA substrate, which together with the progressing nucleotide cycle form the mechanistic basis for DNA recombination by continuous HJ branch migration. Branch migration allows RuvC to scan DNA until it finds its consensus sequence, where it cleaves and resolves cruciform DNA. This chain is Holliday junction branch migration complex subunit RuvB, found in Anaplasma marginale (strain St. Maries).